The sequence spans 163 residues: 3-isopropylmalate dehydratase small subunit (163 aa).

It belongs to the LeuD family. LeuD type 2 subfamily. Heterodimer of LeuC and LeuD.

The catalysed reaction is (2R,3S)-3-isopropylmalate = (2S)-2-isopropylmalate. It participates in amino-acid biosynthesis; L-leucine biosynthesis; L-leucine from 3-methyl-2-oxobutanoate: step 2/4. In terms of biological role, catalyzes the isomerization between 2-isopropylmalate and 3-isopropylmalate, via the formation of 2-isopropylmaleate. This chain is 3-isopropylmalate dehydratase small subunit, found in Clostridioides difficile (strain 630) (Peptoclostridium difficile).